The primary structure comprises 576 residues: Proteinaceous RNase P 3 (576 aa).

Residues 65–75 show a composition bias toward basic and acidic residues; the sequence is NRRSRHDDESP. The interval 65 to 88 is disordered; the sequence is NRRSRHDDESPKNPNKKKKGNRNP. PPR repeat units lie at residues 88–123, 129–166, 167–201, and 204–238; these read PEKSLLINLHSCSKRKDLSAALALYDAAITSSDIRL, QSLLYLCSAFISDPSLQTVAIDRGFQIFDRMVSSGISP, NESSVTAVARLAAAKGDGDYAFKLVKDLVAVGGVS, and RLRTYAPALLCFCDTLEAEKGYEVEDHMDASGIVL. In terms of domain architecture, PRORP spans 335–570; that stretch reads SSAGKCLSCD…KEESLRSWMC (236 aa). 2 residues coordinate Zn(2+): Cys-340 and Cys-343. Mn(2+)-binding residues include Asp-402, Asp-480, Asp-481, and Asp-499. The Zn(2+) site is built by His-553 and Cys-570.

It belongs to the PPR family. P subfamily. Mg(2+) serves as cofactor. Requires Mn(2+) as cofactor.

It localises to the nucleus. The catalysed reaction is Endonucleolytic cleavage of RNA, removing 5'-extranucleotides from tRNA precursor.. Its function is as follows. Endonuclease RNase P responsible for the 5' maturation of tRNA precursors. Also involved in the maturation of mRNA and small nucleolar RNA (snoRNA). This is Proteinaceous RNase P 3 (PRORP3) from Arabidopsis thaliana (Mouse-ear cress).